A 577-amino-acid polypeptide reads, in one-letter code: Isocitrate dehydrogenase kinase/phosphatase (577 aa).

Residues 318–324 (APGVRGM) and K339 each bind ATP. The active site involves D374.

Belongs to the AceK family.

Its subcellular location is the cytoplasm. It carries out the reaction L-seryl-[isocitrate dehydrogenase] + ATP = O-phospho-L-seryl-[isocitrate dehydrogenase] + ADP + H(+). Its function is as follows. Bifunctional enzyme which can phosphorylate or dephosphorylate isocitrate dehydrogenase (IDH) on a specific serine residue. This is a regulatory mechanism which enables bacteria to bypass the Krebs cycle via the glyoxylate shunt in response to the source of carbon. When bacteria are grown on glucose, IDH is fully active and unphosphorylated, but when grown on acetate or ethanol, the activity of IDH declines drastically concomitant with its phosphorylation. The polypeptide is Isocitrate dehydrogenase kinase/phosphatase (Pseudomonas aeruginosa (strain LESB58)).